The chain runs to 164 residues: Large ribosomal subunit protein bL9 (164 aa).

Belongs to the bacterial ribosomal protein bL9 family.

Its function is as follows. Binds to the 23S rRNA. In Borrelia duttonii (strain Ly), this protein is Large ribosomal subunit protein bL9.